Reading from the N-terminus, the 225-residue chain is Deoxyribose-phosphate aldolase (225 aa).

Asp94 serves as the catalytic Proton donor/acceptor. Lys158 serves as the catalytic Schiff-base intermediate with acetaldehyde. The active-site Proton donor/acceptor is the Lys187.

This sequence belongs to the DeoC/FbaB aldolase family. DeoC type 1 subfamily.

It localises to the cytoplasm. The catalysed reaction is 2-deoxy-D-ribose 5-phosphate = D-glyceraldehyde 3-phosphate + acetaldehyde. Its pathway is carbohydrate degradation; 2-deoxy-D-ribose 1-phosphate degradation; D-glyceraldehyde 3-phosphate and acetaldehyde from 2-deoxy-alpha-D-ribose 1-phosphate: step 2/2. Its function is as follows. Catalyzes a reversible aldol reaction between acetaldehyde and D-glyceraldehyde 3-phosphate to generate 2-deoxy-D-ribose 5-phosphate. This is Deoxyribose-phosphate aldolase from Thermococcus gammatolerans (strain DSM 15229 / JCM 11827 / EJ3).